Consider the following 65-residue polypeptide: Myosin-11 (65 aa).

The Myosin motor domain maps to 1 to 65; it reads RSGKLDAFLV…NWQWWRLFTK (65 aa).

This sequence belongs to the TRAFAC class myosin-kinesin ATPase superfamily. Myosin family. In terms of assembly, muscle myosin is a hexameric protein that consists of 2 heavy chain subunits (MHC), 2 alkali light chain subunits (MLC) and 2 regulatory light chain subunits (MLC-2).

The protein resides in the melanosome. The protein localises to the cytoplasm. It localises to the myofibril. In terms of biological role, muscle contraction. The protein is Myosin-11 (MYH11) of Sus scrofa (Pig).